A 305-amino-acid chain; its full sequence is External core antigen (305 aa).

An N-terminal signal peptide occupies residues 1–19; sequence MWSLRLHPSPFGAACQGIF. The tract at residues 226–305 is disordered; the sequence is APTIEAITRP…NQTRSPSPRE (80 aa). Residues 248–279 show a composition bias toward basic residues; that stretch reads GTRKPRGLEPRRRKVKTTVVYGRRRSKSRGRR. Residues 273-305 constitute a propeptide that is removed on maturation; it reads SKSRGRRSSPSQRAGSPLPRNRGNQTRSPSPRE. A compositionally biased stretch (polar residues) spans 294 to 305; the sequence is RGNQTRSPSPRE.

It belongs to the avihepadnavirus precore antigen family. Homodimerizes.

It localises to the secreted. In terms of biological role, may regulate immune response to the intracellular capsid in acting as a T-cell tolerogen, by having an immunoregulatory effect which prevents destruction of infected cells by cytotoxic T-cells. The protein is External core antigen (C) of Heron hepatitis B virus (HHBV).